Here is a 571-residue protein sequence, read N- to C-terminus: Urease subunit alpha (571 aa).

The region spanning 133–571 is the Urease domain; that stretch reads AGIDTHIHFI…VALNQRYFFS (439 aa). Histidine 138, histidine 140, and lysine 221 together coordinate Ni(2+). Lysine 221 carries the post-translational modification N6-carboxylysine. Histidine 223 is a binding site for substrate. Histidine 250 and histidine 276 together coordinate Ni(2+). The active-site Proton donor is histidine 324. Aspartate 364 is a Ni(2+) binding site.

It belongs to the metallo-dependent hydrolases superfamily. Urease alpha subunit family. As to quaternary structure, heterotrimer of UreA (gamma), UreB (beta) and UreC (alpha) subunits. Three heterotrimers associate to form the active enzyme. Requires Ni cation as cofactor. In terms of processing, carboxylation allows a single lysine to coordinate two nickel ions.

It is found in the cytoplasm. The enzyme catalyses urea + 2 H2O + H(+) = hydrogencarbonate + 2 NH4(+). It functions in the pathway nitrogen metabolism; urea degradation; CO(2) and NH(3) from urea (urease route): step 1/1. The chain is Urease subunit alpha from Photorhabdus laumondii subsp. laumondii (strain DSM 15139 / CIP 105565 / TT01) (Photorhabdus luminescens subsp. laumondii).